The sequence spans 82 residues: Sigma-G-dependent sporulation-specific SASP protein (82 aa).

The protein is Sigma-G-dependent sporulation-specific SASP protein of Bacillus subtilis (strain 168).